The following is a 284-amino-acid chain: MEMO1 family protein MMP1387 (284 aa).

The protein belongs to the MEMO1 family.

The polypeptide is MEMO1 family protein MMP1387 (Methanococcus maripaludis (strain DSM 14266 / JCM 13030 / NBRC 101832 / S2 / LL)).